Here is an 843-residue protein sequence, read N- to C-terminus: Protein P (843 aa).

A terminal protein domain (TP) region spans residues 1–177 (MPLSYQHFRK…FCGSPYSWEQ (177 aa)). The interval 178–346 (DLQHGRLVFQ…YCLCHIVNLI (169 aa)) is spacer. Residues 220-265 (QSRLGPQPAQGQLAGRQQGGSGSIRARVHPSPWGTVGVEPSGSGPT) form a disordered region. Residues 223–235 (LGPQPAQGQLAGR) show a composition bias toward low complexity. A polymerase/reverse transcriptase domain (RT) region spans residues 347 to 690 (EDWGPCTEHG…YLNLYPVARQ (344 aa)). Residues 357 to 600 (EHLIRTPRTP…YSLNFMGYVI (244 aa)) enclose the Reverse transcriptase domain. D429, D551, and D552 together coordinate Mg(2+).

The protein belongs to the hepadnaviridae P protein family.

It carries out the reaction DNA(n) + a 2'-deoxyribonucleoside 5'-triphosphate = DNA(n+1) + diphosphate. The enzyme catalyses Endonucleolytic cleavage to 5'-phosphomonoester.. Activated by host HSP70 and HSP40 in vitro to be able to bind the epsilon loop of the pgRNA. Because deletion of the RNase H region renders the protein partly chaperone-independent, the chaperones may be needed indirectly to relieve occlusion of the RNA-binding site by this domain. Inhibited by several reverse-transcriptase inhibitors: Lamivudine, Adefovir and Entecavir. Multifunctional enzyme that converts the viral RNA genome into dsDNA in viral cytoplasmic capsids. This enzyme displays a DNA polymerase activity that can copy either DNA or RNA templates, and a ribonuclease H (RNase H) activity that cleaves the RNA strand of RNA-DNA heteroduplexes in a partially processive 3'- to 5'-endonucleasic mode. Neo-synthesized pregenomic RNA (pgRNA) are encapsidated together with the P protein, and reverse-transcribed inside the nucleocapsid. Initiation of reverse-transcription occurs first by binding the epsilon loop on the pgRNA genome, and is initiated by protein priming, thereby the 5'-end of (-)DNA is covalently linked to P protein. Partial (+)DNA is synthesized from the (-)DNA template and generates the relaxed circular DNA (RC-DNA) genome. After budding and infection, the RC-DNA migrates in the nucleus, and is converted into a plasmid-like covalently closed circular DNA (cccDNA). The activity of P protein does not seem to be necessary for cccDNA generation, and is presumably released from (+)DNA by host nuclear DNA repair machinery. This chain is Protein P, found in Hepatitis B virus genotype B2 (isolate Vietnam/9873/1997) (HBV-B).